The chain runs to 87 residues: Neurotoxin Cex1 (87 aa).

The first 19 residues, Met1–Ala19, serve as a signal peptide directing secretion. In terms of domain architecture, LCN-type CS-alpha/beta spans Lys20 to Gly85. 4 disulfide bridges follow: Cys31-Cys84, Cys35-Cys60, Cys44-Cys65, and Cys48-Cys67. Cys84 carries the cysteine amide modification. Positions Gly85 to Lys87 are excised as a propeptide.

Belongs to the long (4 C-C) scorpion toxin superfamily. Sodium channel inhibitor family. Beta subfamily. As to expression, expressed by the venom gland.

The protein resides in the secreted. Beta toxins bind voltage-independently at site-4 of sodium channels (Nav) and shift the voltage of activation toward more negative potentials thereby affecting sodium channel activation and promoting spontaneous and repetitive firing. This chain is Neurotoxin Cex1, found in Centruroides exilicauda (Bark scorpion).